The following is a 349-amino-acid chain: GTP 3',8-cyclase (349 aa).

One can recognise a Radical SAM core domain in the interval 24–249 (PFGRAITYLR…VDSDYQTGGP (226 aa)). Arginine 33 provides a ligand contact to GTP. Cysteine 40 and cysteine 44 together coordinate [4Fe-4S] cluster. Tyrosine 46 contributes to the S-adenosyl-L-methionine binding site. Cysteine 47 is a binding site for [4Fe-4S] cluster. Arginine 82 provides a ligand contact to GTP. Glycine 86 is an S-adenosyl-L-methionine binding site. Threonine 116 contacts GTP. Residue serine 140 participates in S-adenosyl-L-methionine binding. A GTP-binding site is contributed by lysine 176. Methionine 210 lines the S-adenosyl-L-methionine pocket. 2 residues coordinate [4Fe-4S] cluster: cysteine 273 and cysteine 276. 278–280 (RVR) is a GTP binding site. A [4Fe-4S] cluster-binding site is contributed by cysteine 290.

This sequence belongs to the radical SAM superfamily. MoaA family. As to quaternary structure, monomer and homodimer. [4Fe-4S] cluster is required as a cofactor.

It carries out the reaction GTP + AH2 + S-adenosyl-L-methionine = (8S)-3',8-cyclo-7,8-dihydroguanosine 5'-triphosphate + 5'-deoxyadenosine + L-methionine + A + H(+). The protein operates within cofactor biosynthesis; molybdopterin biosynthesis. Functionally, catalyzes the cyclization of GTP to (8S)-3',8-cyclo-7,8-dihydroguanosine 5'-triphosphate. The chain is GTP 3',8-cyclase from Agrobacterium fabrum (strain C58 / ATCC 33970) (Agrobacterium tumefaciens (strain C58)).